Consider the following 1169-residue polypeptide: Chromosome partition protein Smc (1169 aa).

32-39 (PNGSGKSN) is a binding site for ATP. The stretch at 166 to 507 (DEISGIAEFD…RIKALKEMEE (342 aa)) forms a coiled coil. One can recognise an SMC hinge domain in the interval 523–636 (PGIIDIVGNL…ENIDIAKELA (114 aa)). The stretch at 676-1030 (SKLNKIADEI…NKKKEVFMEV (355 aa)) forms a coiled coil.

Belongs to the SMC family. Homodimer.

The protein localises to the cytoplasm. In terms of biological role, required for chromosome condensation and partitioning. This Methanocaldococcus jannaschii (strain ATCC 43067 / DSM 2661 / JAL-1 / JCM 10045 / NBRC 100440) (Methanococcus jannaschii) protein is Chromosome partition protein Smc.